A 615-amino-acid chain; its full sequence is Proteasome-associated ATPase (615 aa).

The segment at 1–36 (MSESERPEAGDGTDALGASPDTPLSSEDAAELEQLR) is disordered. The stretch at 25–102 (SSEDAAELEQ…LREEVDRLGQ (78 aa)) forms a coiled coil. An ATP-binding site is contributed by 302–307 (GCGKTL). A docks into pockets in the proteasome alpha-ring region spans residues 614-615 (YL).

It belongs to the AAA ATPase family. As to quaternary structure, homohexamer. Assembles into a hexameric ring structure that caps the 20S proteasome core. Strongly interacts with the prokaryotic ubiquitin-like protein Pup through a hydrophobic interface; the interacting region of ARC lies in its N-terminal coiled-coil domain. There is one Pup binding site per ARC hexamer ring. Upon ATP-binding, the C-terminus of ARC interacts with the alpha-rings of the proteasome core, possibly by binding to the intersubunit pockets.

The protein operates within protein degradation; proteasomal Pup-dependent pathway. Its function is as follows. ATPase which is responsible for recognizing, binding, unfolding and translocation of pupylated proteins into the bacterial 20S proteasome core particle. May be essential for opening the gate of the 20S proteasome via an interaction with its C-terminus, thereby allowing substrate entry and access to the site of proteolysis. Thus, the C-termini of the proteasomal ATPase may function like a 'key in a lock' to induce gate opening and therefore regulate proteolysis. This chain is Proteasome-associated ATPase, found in Mycolicibacterium gilvum (strain PYR-GCK) (Mycobacterium gilvum (strain PYR-GCK)).